Consider the following 108-residue polypeptide: Replication restart protein PriB (108 aa).

The 101-residue stretch at 8–108 (IDNSFSVMGV…LHAEQIEFID (101 aa)) folds into the SSB domain.

It belongs to the PriB family. As to quaternary structure, homodimer. Interacts with PriA and DnaT. Component of the replication restart primosome. Primosome assembly occurs via a 'hand-off' mechanism. PriA binds to replication forks, subsequently PriB then DnaT bind; DnaT then displaces ssDNA to generate the helicase loading substrate.

Functionally, involved in the restart of stalled replication forks, which reloads the replicative helicase on sites other than the origin of replication; the PriA-PriB pathway is the major replication restart pathway. During primosome assembly it facilitates complex formation between PriA and DnaT on DNA; stabilizes PriA on DNA. Stimulates the DNA unwinding activity of PriA helicase. This Haemophilus influenzae (strain ATCC 51907 / DSM 11121 / KW20 / Rd) protein is Replication restart protein PriB.